A 162-amino-acid chain; its full sequence is Globin CTT-VI (162 aa).

An N-terminal signal peptide occupies residues 1-15 (MKFLVLALCIAAASA). The Globin domain occupies 17–161 (VLTTEQADLV…TYAMLFSAMD (145 aa)). His75 and His110 together coordinate heme b.

It belongs to the globin family. In terms of assembly, homodimer.

This is Globin CTT-VI (CTT-6) from Chironomus thummi thummi (Midge).